Reading from the N-terminus, the 102-residue chain is Putative defensin-like protein 152 (102 aa).

An N-terminal signal peptide occupies residues 1–29 (MKKASQLSTTILTIFIVLAIGMMVKGTVG). 4 disulfide bridges follow: Cys-34/Cys-93, Cys-51/Cys-71, Cys-56/Cys-87, and Cys-60/Cys-89.

Belongs to the DEFL family.

It is found in the secreted. The protein is Putative defensin-like protein 152 (LCR11) of Arabidopsis thaliana (Mouse-ear cress).